The primary structure comprises 150 residues: 15 kDa calcium-binding protein (150 aa).

Position 1 is an N-acetylalanine (A1). 4 EF-hand domains span residues T7–S42, F43–K78, W81–P116, and M118–S150. Positions 22, 24, 26, 28, 56, 58, 60, 62, 67, 94, 96, 98, 105, 131, 133, 135, 137, and 142 each coordinate Ca(2+).

It localises to the nucleus. Its subcellular location is the cytoplasm. It is found in the cytoskeleton. The protein resides in the spindle. Its function is as follows. May play an important role in mitosis of sea urchin egg. May function as a Ca(2+)-dependent intracellular modulator of microtubule assembly. The protein is 15 kDa calcium-binding protein of Hemicentrotus pulcherrimus (Sea urchin).